We begin with the raw amino-acid sequence, 157 residues long: Stalk-specific protein A (157 aa).

Positions 1–19 (MRSILILLSLLLTIAFASA) are cleaved as a signal peptide.

The protein localises to the secreted. The sequence is that of Stalk-specific protein A (staA) from Dictyostelium discoideum (Social amoeba).